The following is a 466-amino-acid chain: Magnetosome-associated protein MamJ (466 aa).

2 disordered regions span residues 1–23 and 60–80; these read MAKN…ISTG and ANQG…RSQD. The not required to restore magnetic response to deletion mutant stretch occupies residues 1 to 24; it reads MAKNRRDRGTDLPGDGDQKISTGP. The tract at residues 25–80 is required to restore magnetic response to deletion mutant; the sequence is EIVSVTVHPSPNLAAAAKPVQGDIWASLLESSPWSANQGGLVETAQPPSAPIRSQD. Tandem repeat unit repeat units follow at residues 81–168 and 169–256; these read PVPV…VEPE and PAPV…VEPE. Not required to restore magnetic response to deletion mutant regions lie at residues 81-256, 136-334, 333-374, and 432-466; these read PVPV…VEPE, ETDA…SQAE, AESV…AVEA, and VGSN…DKNK. Glu-Pro-rich motif repeat units follow at residues 145–164, 233–252, and 253–272; these read IEPE…EAAE and VEPE…EAAE. Required to restore magnetic response to deletion mutant stretches follow at residues 375–432 and 426–466; these read TRQP…GRLV and VKGG…DKNK.

This sequence belongs to the magnetosome MamJ protein family. Forms homooligomers. Interacts with MamK. Identified by N-terminal sequencing of a protein that is about 96 kDa in size. The protein runs anomalously on protein gels.

Its subcellular location is the magnetosome. Its function is as follows. Required for assembly of magnetosome chains. Regulates the dynamic behavior of MamK filaments. May connect magnetosomes to MamK filaments. Moves from the cell poles towards midcell; movement does not depend on the treadmilling ability of MamK, suggesting MamJ associates and disassociates continuously from the MamK filament. The polypeptide is Magnetosome-associated protein MamJ (Magnetospirillum gryphiswaldense (strain DSM 6361 / JCM 21280 / NBRC 15271 / MSR-1)).